The following is a 229-amino-acid chain: Enolase-phosphatase E1 (229 aa).

It belongs to the HAD-like hydrolase superfamily. MasA/MtnC family. As to quaternary structure, monomer. It depends on Mg(2+) as a cofactor.

The enzyme catalyses 5-methylsulfanyl-2,3-dioxopentyl phosphate + H2O = 1,2-dihydroxy-5-(methylsulfanyl)pent-1-en-3-one + phosphate. It functions in the pathway amino-acid biosynthesis; L-methionine biosynthesis via salvage pathway; L-methionine from S-methyl-5-thio-alpha-D-ribose 1-phosphate: step 3/6. The protein operates within amino-acid biosynthesis; L-methionine biosynthesis via salvage pathway; L-methionine from S-methyl-5-thio-alpha-D-ribose 1-phosphate: step 4/6. Functionally, bifunctional enzyme that catalyzes the enolization of 2,3-diketo-5-methylthiopentyl-1-phosphate (DK-MTP-1-P) into the intermediate 2-hydroxy-3-keto-5-methylthiopentenyl-1-phosphate (HK-MTPenyl-1-P), which is then dephosphorylated to form the acireductone 1,2-dihydroxy-3-keto-5-methylthiopentene (DHK-MTPene). In Citrobacter koseri (strain ATCC BAA-895 / CDC 4225-83 / SGSC4696), this protein is Enolase-phosphatase E1.